Reading from the N-terminus, the 706-residue chain is Ribosomal RNA large subunit methyltransferase K/L (706 aa).

The THUMP domain occupies 43–154; the sequence is LMYQSLLWSR…RDMASVALDL (112 aa).

The protein belongs to the methyltransferase superfamily. RlmKL family.

Its subcellular location is the cytoplasm. The catalysed reaction is guanosine(2445) in 23S rRNA + S-adenosyl-L-methionine = N(2)-methylguanosine(2445) in 23S rRNA + S-adenosyl-L-homocysteine + H(+). The enzyme catalyses guanosine(2069) in 23S rRNA + S-adenosyl-L-methionine = N(2)-methylguanosine(2069) in 23S rRNA + S-adenosyl-L-homocysteine + H(+). Functionally, specifically methylates the guanine in position 2445 (m2G2445) and the guanine in position 2069 (m7G2069) of 23S rRNA. The protein is Ribosomal RNA large subunit methyltransferase K/L of Yersinia pestis bv. Antiqua (strain Antiqua).